The primary structure comprises 491 residues: Proline--tRNA ligase (491 aa).

It belongs to the class-II aminoacyl-tRNA synthetase family. ProS type 3 subfamily. Homodimer.

The protein resides in the cytoplasm. It carries out the reaction tRNA(Pro) + L-proline + ATP = L-prolyl-tRNA(Pro) + AMP + diphosphate. Its function is as follows. Catalyzes the attachment of proline to tRNA(Pro) in a two-step reaction: proline is first activated by ATP to form Pro-AMP and then transferred to the acceptor end of tRNA(Pro). The chain is Proline--tRNA ligase from Cytophaga hutchinsonii (strain ATCC 33406 / DSM 1761 / CIP 103989 / NBRC 15051 / NCIMB 9469 / D465).